Here is a 122-residue protein sequence, read N- to C-terminus: MSHDRRLTVGSLLPNQPRPVAVPKAPSVVQPSKQPLPEKAIIRLEQNGRSFSVRHVKGNLLTEGLSQGLPLQYKCRKGTCGVCTVKVTDGASRLSLPNQQEHKKLQGNIKSGFRLACQANME.

The disordered stretch occupies residues 1-33 (MSHDRRLTVGSLLPNQPRPVAVPKAPSVVQPSK). A targeting peptide region spans residues 8 to 14 (TVGSLLP). A 2Fe-2S ferredoxin-type domain is found at 40 to 122 (AIIRLEQNGR…FRLACQANME (83 aa)). [2Fe-2S] cluster-binding residues include C75, C80, C83, and C117.

It belongs to the 2Fe2S plant-type ferredoxin family. [2Fe-2S] cluster is required as a cofactor.

Its subcellular location is the encapsulin nanocompartment. In terms of biological role, cargo protein of a type 1 encapsulin nanocompartment. An iron-binding protein probably involved in iron mineralization in the encapsulin nanocompartment. 2 different cargo proteins have been identified (IMEF and Fer); when both are expressed in E.coli with the shell protein only IMEF is detected within the nanocompartment. E.coli expressing all 3 genes stores the largest amount of iron and is protected from Fe/H2O2-induced oxidative stress. This Bacillus thermotolerans (Quasibacillus thermotolerans) protein is Ferredoxin.